A 367-amino-acid polypeptide reads, in one-letter code: Queuine tRNA-ribosyltransferase (367 aa).

The Proton acceptor role is filled by Asp-92. Residues Asp-92 to Phe-96, Asp-146, Gln-188, and Gly-215 contribute to the substrate site. An RNA binding region spans residues Gly-246–Asp-252. Catalysis depends on Asp-265, which acts as the Nucleophile. Positions 303, 305, 308, and 334 each coordinate Zn(2+).

This sequence belongs to the queuine tRNA-ribosyltransferase family. As to quaternary structure, homodimer. Within each dimer, one monomer is responsible for RNA recognition and catalysis, while the other monomer binds to the replacement base PreQ1. The cofactor is Zn(2+).

The catalysed reaction is 7-aminomethyl-7-carbaguanine + guanosine(34) in tRNA = 7-aminomethyl-7-carbaguanosine(34) in tRNA + guanine. It functions in the pathway tRNA modification; tRNA-queuosine biosynthesis. Functionally, catalyzes the base-exchange of a guanine (G) residue with the queuine precursor 7-aminomethyl-7-deazaguanine (PreQ1) at position 34 (anticodon wobble position) in tRNAs with GU(N) anticodons (tRNA-Asp, -Asn, -His and -Tyr). Catalysis occurs through a double-displacement mechanism. The nucleophile active site attacks the C1' of nucleotide 34 to detach the guanine base from the RNA, forming a covalent enzyme-RNA intermediate. The proton acceptor active site deprotonates the incoming PreQ1, allowing a nucleophilic attack on the C1' of the ribose to form the product. After dissociation, two additional enzymatic reactions on the tRNA convert PreQ1 to queuine (Q), resulting in the hypermodified nucleoside queuosine (7-(((4,5-cis-dihydroxy-2-cyclopenten-1-yl)amino)methyl)-7-deazaguanosine). This chain is Queuine tRNA-ribosyltransferase, found in Francisella tularensis subsp. tularensis (strain FSC 198).